We begin with the raw amino-acid sequence, 500 residues long: Protein adenylyltransferase Fic (500 aa).

Residues 39–59 traverse the membrane as a helical segment; sequence LSFLIFFVIGSLFSGLMFALL. TPR repeat units follow at residues 122 to 155 and 156 to 190; these read ALSS…SPRH and PEIL…NPSH. The short motif at 247 to 252 is the Inhibitory (S/T)XXXE(G/N) motif element; sequence SVGIEG. Residues Glu-251 and 333–336 each bind ATP; that span reads VGGH. The 136-residue stretch at 302 to 437 folds into the Fido domain; the sequence is ITLKDLLEIH…IRPFVRFIAD (136 aa). The active site involves His-380. ATP-binding positions include 384 to 391, 416 to 417, and Asn-424; these read DGNGRTSR and YY. The interval 477–500 is disordered; that stretch reads GREGGSTVHEGSGTGDSIRIGTMW.

The protein belongs to the fic family. As to quaternary structure, homodimer.

It localises to the membrane. It carries out the reaction L-tyrosyl-[protein] + ATP = O-(5'-adenylyl)-L-tyrosyl-[protein] + diphosphate. The enzyme catalyses L-threonyl-[protein] + ATP = 3-O-(5'-adenylyl)-L-threonyl-[protein] + diphosphate. It catalyses the reaction 3-O-(5'-adenylyl)-L-threonyl-[protein] + H2O = L-threonyl-[protein] + AMP + H(+). Its activity is regulated as follows. The side chain of Glu-251 determines which of the two opposing activities (AMPylase or de-AMPylase) will take place. In response to endoplasmic reticulum stress, mediates de-AMPylase activity. Adenylyltransferase activity is inhibited by the inhibitory helix present at the N-terminus: Glu-251 binds ATP and competes with ATP-binding at Arg-391, thereby preventing adenylyltransferase activity. In unstressed cells, disengagement of Glu-251 promotes adenylyltransferase activity. Activation dissociates ATP-binding from Glu-251, allowing ordered binding of the entire ATP moiety with the alpha-phosphate in an orientation that is productive for accepting an incoming target hydroxyl side chain. Functionally, protein that can both mediate the addition of adenosine 5'-monophosphate (AMP) to specific residues of target proteins (AMPylation), and the removal of the same modification from target proteins (de-AMPylation), depending on the context. The side chain of Glu-251 determines which of the two opposing activities (AMPylase or de-AMPylase) will take place. Acts as a key regulator of the unfolded protein response (UPR) by mediating AMPylation or de-AMPylation of Hsc70-3/BiP. In unstressed cells, acts as an adenylyltransferase by mediating AMPylation of Hsc70-3/BiP at 'Thr-518', thereby inactivating it. In response to endoplasmic reticulum stress, acts as a phosphodiesterase by mediating removal of ATP (de-AMPylation) from Hsc70-3/BiP at 'Thr-518', leading to restore HSPA5/BiP activity. This is Protein adenylyltransferase Fic from Culex quinquefasciatus (Southern house mosquito).